We begin with the raw amino-acid sequence, 492 residues long: Serine/threonine protein phosphatase 2A 57 kDa regulatory subunit B' theta isoform (492 aa).

Positions M1–N63 are disordered. The segment covering K16–S39 has biased composition (low complexity). A Microbody targeting signal motif is present at residues S490–L492.

It belongs to the phosphatase 2A regulatory subunit B56 family. As to quaternary structure, PP2A consists of a common heteromeric enzyme, composed of a catalytic subunit (subunits C), a constant regulatory subunit (subunit A), and a variety of regulatory subunits such as subunits B (the R2/B/PR55/B55, R3/B''/PR72/PR130/PR59 and R5/B'/B56 families). Interacts with BZR1. Interacts with PP2A2, PP2A5 and PP2AA2. As to expression, highly expressed in dry seeds. Expressed in roots, cotyledons, rosette leaves and flowers.

It is found in the cytoplasm. Its subcellular location is the cytosol. It localises to the peroxisome. In terms of biological role, the B regulatory subunit may modulate substrate selectivity and catalytic activity, and may also direct the localization of the catalytic enzyme to a particular subcellular compartment. Associates with the serine/threonine-protein phosphatase PP2A catalytic subunit C and regulatory subunit A to positively regulates beta-oxidation of fatty acids and protoauxins in peroxisomes by dephosphorylating peroxisomal beta-oxidation-related proteins. Required for the formation of the PP2A holoenzyme that negatively regulates brassinosteroid signaling by dephosphorylating and inactivating BRI1 in the cytoplasm. In Arabidopsis thaliana (Mouse-ear cress), this protein is Serine/threonine protein phosphatase 2A 57 kDa regulatory subunit B' theta isoform (B'THETA).